A 165-amino-acid polypeptide reads, in one-letter code: Aspartate carbamoyltransferase regulatory chain (165 aa).

Residues C121, C126, C149, and C152 each contribute to the Zn(2+) site.

It belongs to the PyrI family. In terms of assembly, contains catalytic and regulatory chains. Zn(2+) serves as cofactor.

In terms of biological role, involved in allosteric regulation of aspartate carbamoyltransferase. In Methanoregula boonei (strain DSM 21154 / JCM 14090 / 6A8), this protein is Aspartate carbamoyltransferase regulatory chain.